The following is a 207-amino-acid chain: Putative 3-methyladenine DNA glycosylase (207 aa).

This sequence belongs to the DNA glycosylase MPG family.

This Koribacter versatilis (strain Ellin345) protein is Putative 3-methyladenine DNA glycosylase.